The following is a 59-amino-acid chain: Large ribosomal subunit protein bL32 (59 aa).

It belongs to the bacterial ribosomal protein bL32 family.

The polypeptide is Large ribosomal subunit protein bL32 (Thermodesulfovibrio yellowstonii (strain ATCC 51303 / DSM 11347 / YP87)).